We begin with the raw amino-acid sequence, 79 residues long: Cytochrome b (79 aa).

A run of 3 helical transmembrane segments spans residues 1 to 7 (SALFLAM), 31 to 52 (WLIRYIHANGASLFFICLYLHI), and 67 to 79 (WNIGIILLFLTMA). Residues His-37 and His-51 each coordinate heme b.

It belongs to the cytochrome b family. As to quaternary structure, the cytochrome bc1 complex contains 11 subunits: 3 respiratory subunits (MT-CYB, CYC1 and UQCRFS1), 2 core proteins (UQCRC1 and UQCRC2) and 6 low-molecular weight proteins (UQCRH/QCR6, UQCRB/QCR7, UQCRQ/QCR8, UQCR10/QCR9, UQCR11/QCR10 and a cleavage product of UQCRFS1). This cytochrome bc1 complex then forms a dimer. Heme b serves as cofactor.

It is found in the mitochondrion inner membrane. Its function is as follows. Component of the ubiquinol-cytochrome c reductase complex (complex III or cytochrome b-c1 complex) that is part of the mitochondrial respiratory chain. The b-c1 complex mediates electron transfer from ubiquinol to cytochrome c. Contributes to the generation of a proton gradient across the mitochondrial membrane that is then used for ATP synthesis. The chain is Cytochrome b (MT-CYB) from Dipodomys panamintinus (Panamint kangaroo rat).